A 317-amino-acid chain; its full sequence is Melanocyte-stimulating hormone receptor (317 aa).

Topologically, residues 1 to 37 (MPVQGSQRRLLGSLNSTPTATPHLGLAANQTGARCLE) are extracellular. A glycan (N-linked (GlcNAc...) asparagine) is linked at asparagine 29. Residues 38–63 (VSIPDGLFLSLGLVSLVENVLVVTAI) form a helical membrane-spanning segment. At 64–72 (AKNRNLHSP) the chain is on the cytoplasmic side. Residues 73 to 93 (MYCFICCLALSDLLVSGSNML) form a helical membrane-spanning segment. At 94–118 (ETAVTLLLEAGALAARAAVVQQLDN) the chain is on the extracellular side. A helical transmembrane segment spans residues 119-140 (VIDVITCSSMLSSLCFLGAIAV). The Cytoplasmic portion of the chain corresponds to 141 to 163 (DRYISIFYALRYHSIVTLPRARR). A helical membrane pass occupies residues 164 to 183 (AVAAIWVASVLFSMLFIAYY). Residues 184-191 (DHAAVLLC) are Extracellular-facing. The chain crosses the membrane as a helical span at residues 192–211 (LVVFFLAMLVLMAVLYVHML). Topologically, residues 212–240 (ARACQHAQGIARLHKRQRPAHQGFGLKGA) are cytoplasmic. The helical transmembrane segment at 241 to 266 (ATLTILLGIFFLCWGPFFLHLTLIVL) threads the bilayer. Topologically, residues 267–279 (CPQHPTCSCIFKN) are extracellular. The chain crosses the membrane as a helical span at residues 280-300 (FNLFLALIICNAIIDPLIYAF). At 301 to 317 (RSQELRRTLKEVLLCSW) the chain is on the cytoplasmic side. Cysteine 315 carries the S-palmitoyl cysteine lipid modification.

This sequence belongs to the G-protein coupled receptor 1 family. As to quaternary structure, interacts with MGRN1, but does not undergo MGRN1-mediated ubiquitination; this interaction competes with GNAS-binding and thus inhibits agonist-induced cAMP production. Interacts with OPN3; the interaction results in a decrease in MC1R-mediated cAMP signaling and ultimately a decrease in melanin production in melanocytes.

Its subcellular location is the cell membrane. In terms of biological role, receptor for MSH (alpha, beta and gamma) and ACTH. The activity of this receptor is mediated by G proteins which activate adenylate cyclase. Mediates melanogenesis, the production of eumelanin (black/brown) and phaeomelanin (red/yellow), via regulation of cAMP signaling in melanocytes. The chain is Melanocyte-stimulating hormone receptor (MC1R) from Miopithecus talapoin (Angolan talapoin).